Consider the following 303-residue polypeptide: Pyridoxal 5'-phosphate synthase subunit PdxS (303 aa).

D33 contacts D-ribose 5-phosphate. K90 acts as the Schiff-base intermediate with D-ribose 5-phosphate in catalysis. A D-ribose 5-phosphate-binding site is contributed by G162. Residue R174 coordinates D-glyceraldehyde 3-phosphate. D-ribose 5-phosphate is bound by residues G223 and 244 to 245 (GS).

Belongs to the PdxS/SNZ family. As to quaternary structure, in the presence of PdxT, forms a dodecamer of heterodimers.

The enzyme catalyses aldehydo-D-ribose 5-phosphate + D-glyceraldehyde 3-phosphate + L-glutamine = pyridoxal 5'-phosphate + L-glutamate + phosphate + 3 H2O + H(+). The protein operates within cofactor biosynthesis; pyridoxal 5'-phosphate biosynthesis. In terms of biological role, catalyzes the formation of pyridoxal 5'-phosphate from ribose 5-phosphate (RBP), glyceraldehyde 3-phosphate (G3P) and ammonia. The ammonia is provided by the PdxT subunit. Can also use ribulose 5-phosphate and dihydroxyacetone phosphate as substrates, resulting from enzyme-catalyzed isomerization of RBP and G3P, respectively. In Mycobacterium avium (strain 104), this protein is Pyridoxal 5'-phosphate synthase subunit PdxS.